The chain runs to 439 residues: MKTQIELARDGIISRQMEQVAADENFNPEIIRTRVAAGEIVIPCNPNRTNQKVVGIGTGLRTKINASIGTSSDICSIENEVQKAIAIEEEGADTLMELSAGGNLDKVRQEVLKAVNLPVGNVPLYQAFKETGRKYNDPSKLDPEFLFDLIERQLSDGLSFMAIHCGINQYTIERLRKQGFRYGGLASKGGTFMVAWMDATGKENPLYEQFDRVCTLMKKYDAVLSLGNGIRAGAIHDSHDRAQMAEMIINCELAELGREQGCQMMVEGPGHVPLDEIQANIILEKRMSGNAPYYVLGPIPADTGAGYDHITSAIGAASSTWHGADLICYITPAEHLALPTEADVREGVRATKLAVRIGDIAKYPDRRENERLASMARRDMRWDDLEQHLLFPDIARKTRASRAPEDGGTCTMCGDFCAMKKGNEIFKDDIKNDKIAPGA.

Residues Met-96, Tyr-125, His-164, 187–189 (SKG), 228–231 (NGIR), and Glu-267 each bind substrate. Position 271 (His-271) interacts with Zn(2+). Residue Tyr-294 coordinates substrate. His-335 is a binding site for Zn(2+). [4Fe-4S] cluster is bound by residues Cys-410, Cys-413, and Cys-417.

Belongs to the ThiC family. 5-hydroxybenzimidazole synthase subfamily. In terms of assembly, homodimer. [4Fe-4S] cluster serves as cofactor.

The enzyme catalyses 5-amino-1-(5-phospho-beta-D-ribosyl)imidazole + AH2 + S-adenosyl-L-methionine = 5-hydroxybenzimidazole + 5'-deoxyadenosine + formate + L-methionine + A + NH4(+) + phosphate + 2 H(+). Its function is as follows. Catalyzes the conversion of aminoimidazole ribotide (AIR) to 5-hydroxybenzimidazole (5-HBI) in a radical S-adenosyl-L-methionine (SAM)-dependent reaction. Is thus involved in the anaerobic biosynthesis of the benzimidazole lower axial ligand of the cobamide produced by D.autotrophicum. The sequence is that of 5-hydroxybenzimidazole synthase from Desulforapulum autotrophicum (strain ATCC 43914 / DSM 3382 / VKM B-1955 / HRM2) (Desulfobacterium autotrophicum).